Here is a 369-residue protein sequence, read N- to C-terminus: 3-isopropylmalate dehydrogenase (369 aa).

Substrate contacts are provided by Arg98, Arg108, Arg136, and Asp227. Positions 227, 251, and 255 each coordinate Mg(2+). 290 to 302 (GSAPDIAGKGIAN) contributes to the NAD(+) binding site.

This sequence belongs to the isocitrate and isopropylmalate dehydrogenases family. LeuB type 1 subfamily. As to quaternary structure, homodimer. It depends on Mg(2+) as a cofactor. Mn(2+) serves as cofactor.

Its subcellular location is the cytoplasm. The enzyme catalyses (2R,3S)-3-isopropylmalate + NAD(+) = 4-methyl-2-oxopentanoate + CO2 + NADH. It functions in the pathway amino-acid biosynthesis; L-leucine biosynthesis; L-leucine from 3-methyl-2-oxobutanoate: step 3/4. Catalyzes the oxidation of 3-carboxy-2-hydroxy-4-methylpentanoate (3-isopropylmalate) to 3-carboxy-4-methyl-2-oxopentanoate. The product decarboxylates to 4-methyl-2 oxopentanoate. This is 3-isopropylmalate dehydrogenase from Gluconobacter oxydans (strain 621H) (Gluconobacter suboxydans).